A 498-amino-acid polypeptide reads, in one-letter code: Ulvan-active sulfatase (498 aa).

A signal peptide spans Met-1–Ser-22. Ca(2+)-binding residues include Asp-55, Asp-56, Cys-95, Asp-266, and His-267. Cys-95 acts as the Nucleophile in catalysis. Cys-95 carries the 3-oxoalanine (Cys) modification.

It belongs to the sulfatase family. The cofactor is Ca(2+). Post-translationally, the conversion to 3-oxoalanine (also known as C-formylglycine, FGly), of a serine or cysteine residue in prokaryotes and of a cysteine residue in eukaryotes, is critical for catalytic activity. This post-translational modification is severely defective in multiple sulfatase deficiency (MSD).

It localises to the periplasm. In terms of biological role, sulfatase involved in ulvan degradation. Ulvan is the main polysaccharide component of the Ulvales (green seaweed) cell wall. It is composed of disaccharide building blocks comprising 3-sulfated rhamnose (Rha3S) linked to D-glucuronic acid (GlcA), L-iduronic acid (IduA), or D-xylose (Xyl). The chain is Ulvan-active sulfatase from Formosa agariphila (strain DSM 15362 / KCTC 12365 / LMG 23005 / KMM 3901 / M-2Alg 35-1).